The sequence spans 423 residues: Proline racemase A (423 aa).

The N-terminal stretch at 1–31 is a signal peptide; it reads MRKSVCPKQKFFFSAFPFFFFFCVFPLISRT. Catalysis depends on Cys-160, which acts as the Proton acceptor. 161 to 162 provides a ligand contact to substrate; the sequence is GH. Residues Asn-213, Asn-266, and Asn-282 are each glycosylated (N-linked (GlcNAc...) asparagine). Asp-326 contributes to the substrate binding site. The active-site Proton donor is Cys-330. 331–332 is a binding site for substrate; that stretch reads GT.

It belongs to the proline racemase family. As to quaternary structure, homodimer.

Its subcellular location is the secreted. The protein localises to the membrane. The protein resides in the cytoplasm. It catalyses the reaction L-proline = D-proline. Inhibited by maleic acid, iodoacetamide, iodoacetate and, most particularly, pyrrole-2-carboxylic acid. Catalyzes the interconversion of L- and D-proline. Secreted isoform 1 contributes to parasite immune evasion by acting as a B-cell mitogen. Probably involved in parasite differentiation and infectivity. This chain is Proline racemase A (PA45-A), found in Trypanosoma cruzi (strain CL Brener).